A 176-amino-acid chain; its full sequence is MAASTDMAGLEESFRKFAIHGDPKASGQEMNGKNWAKLCKDCKVADGKSVTGTDVDIVFSKVKGKSARVINYEEFKKALEELATKRFKGKSKEEAFDAICQLVAGKEPANVGVTKAKTGGAVDRLTDTSRYTGSHKERFDESGKGKGIAGRQDILDDSGYVSAYKNAGTYDAKVKK.

At alanine 2 the chain carries N-acetylalanine. The interval 132–152 (TGSHKERFDESGKGKGIAGRQ) is disordered. The segment covering 134–144 (SHKERFDESGK) has biased composition (basic and acidic residues).

This sequence belongs to the TPPP family. Expressed in endometrium during the mid-secretory phase (LH + 7) (at protein level).

The protein resides in the cytoplasm. It localises to the cytoskeleton. Regulator of microtubule dynamic that has microtubule bundling activity. Required for embryo implantation; possibly by regulating beta-catenin. Also required for decidualization via regulation of beta-catenin. This Homo sapiens (Human) protein is Tubulin polymerization-promoting protein family member 3.